The primary structure comprises 260 residues: Na(+)-translocating NADH-quinone reductase subunit C (260 aa).

A helical membrane pass occupies residues 12-32 (LLVIILLSLACSIIVAGSAVL). At Thr226 the chain carries FMN phosphoryl threonine.

It belongs to the NqrC family. As to quaternary structure, composed of six subunits; NqrA, NqrB, NqrC, NqrD, NqrE and NqrF. It depends on FMN as a cofactor.

Its subcellular location is the cell inner membrane. The catalysed reaction is a ubiquinone + n Na(+)(in) + NADH + H(+) = a ubiquinol + n Na(+)(out) + NAD(+). NQR complex catalyzes the reduction of ubiquinone-1 to ubiquinol by two successive reactions, coupled with the transport of Na(+) ions from the cytoplasm to the periplasm. NqrA to NqrE are probably involved in the second step, the conversion of ubisemiquinone to ubiquinol. In Pasteurella multocida (strain Pm70), this protein is Na(+)-translocating NADH-quinone reductase subunit C.